The sequence spans 287 residues: UPF0098 protein AF_1698 (287 aa).

This sequence belongs to the UPF0098 family.

The chain is UPF0098 protein AF_1698 from Archaeoglobus fulgidus (strain ATCC 49558 / DSM 4304 / JCM 9628 / NBRC 100126 / VC-16).